The sequence spans 346 residues: Angiopoietin-related protein 7 (346 aa).

A signal peptide spans 1–26 (MLKKPLSAVTWLCIFIVAFVSHPAWL). Residues 39–119 (QLKAANCCEE…DIMQLQAAQT (81 aa)) adopt a coiled-coil conformation. A glycan (N-linked (GlcNAc...) asparagine) is linked at Asn-58. Residues 122 to 343 (QTSADAIYDC…RVEMKIRPED (222 aa)) enclose the Fibrinogen C-terminal domain. A disulfide bridge links Cys-131 with Cys-162. N-linked (GlcNAc...) asparagine glycans are attached at residues Asn-253 and Asn-267. Cys-285 and Cys-298 are oxidised to a cystine.

In terms of assembly, homotetramer; disulfide-linked. Highly expressed in the cornea (at protein level). Expression is restricted to the stromal layer. Also detected at the junction between the corneal stromal layer and the conjuctiva. Not detected in the sclera.

The protein localises to the secreted. Its function is as follows. Has a role in the formation and organization of the extracellular matrix. In the eye, it functions as a mediator of dexamethasone-induced matrix deposition in the trabecular meshwork, the tissue responsible for the outflow of the ocular aqueous humor and for the maintenance of intraocular pressure. Is a negative regulator of angiogenesis in the cornea, and plays a major role in maintaining corneal avascularity and transparency. This chain is Angiopoietin-related protein 7 (ANGPTL7), found in Homo sapiens (Human).